The primary structure comprises 361 residues: Aminomethyltransferase (361 aa).

Belongs to the GcvT family. In terms of assembly, the glycine cleavage system is composed of four proteins: P, T, L and H.

The enzyme catalyses N(6)-[(R)-S(8)-aminomethyldihydrolipoyl]-L-lysyl-[protein] + (6S)-5,6,7,8-tetrahydrofolate = N(6)-[(R)-dihydrolipoyl]-L-lysyl-[protein] + (6R)-5,10-methylene-5,6,7,8-tetrahydrofolate + NH4(+). In terms of biological role, the glycine cleavage system catalyzes the degradation of glycine. The polypeptide is Aminomethyltransferase (Phocaeicola vulgatus (strain ATCC 8482 / DSM 1447 / JCM 5826 / CCUG 4940 / NBRC 14291 / NCTC 11154) (Bacteroides vulgatus)).